Here is a 150-residue protein sequence, read N- to C-terminus: Large ribosomal subunit protein bL9 (150 aa).

This sequence belongs to the bacterial ribosomal protein bL9 family.

Its function is as follows. Binds to the 23S rRNA. This is Large ribosomal subunit protein bL9 from Streptococcus equi subsp. zooepidemicus (strain MGCS10565).